Consider the following 429-residue polypeptide: Adenosylhomocysteinase (429 aa).

Substrate contacts are provided by threonine 64, aspartate 136, and glutamate 161. 162 to 164 (TTT) lines the NAD(+) pocket. Substrate contacts are provided by lysine 191 and aspartate 195. Residues asparagine 196, 225 to 230 (GYGWCG), glutamate 248, asparagine 283, 304 to 306 (SGH), and asparagine 351 contribute to the NAD(+) site.

It belongs to the adenosylhomocysteinase family. NAD(+) serves as cofactor.

The protein resides in the cytoplasm. The catalysed reaction is S-adenosyl-L-homocysteine + H2O = L-homocysteine + adenosine. Its pathway is amino-acid biosynthesis; L-homocysteine biosynthesis; L-homocysteine from S-adenosyl-L-homocysteine: step 1/1. In terms of biological role, may play a key role in the regulation of the intracellular concentration of adenosylhomocysteine. The protein is Adenosylhomocysteinase of Gloeothece citriformis (strain PCC 7424) (Cyanothece sp. (strain PCC 7424)).